Here is a 127-residue protein sequence, read N- to C-terminus: Protein ApaG (127 aa).

The region spanning 3–127 is the ApaG domain; sequence ANSPPTIKCN…FRLAIPNILH (125 aa).

The chain is Protein ApaG from Photobacterium profundum (strain SS9).